Reading from the N-terminus, the 168-residue chain is Pathogenesis-related protein 1C (168 aa).

An N-terminal signal peptide occupies residues 1-30; the sequence is MEFVLFSQMSSFFLVSTLLLFLIISHSCHA. Positions 38–156 constitute an SCP domain; it reads LDAHNTARAD…NGGYIVSCNY (119 aa).

The protein belongs to the CRISP family. Post-translationally, three disulfide bonds are present.

It is found in the vacuole. Functionally, probably involved in the defense reaction of plants against pathogens. This Nicotiana tabacum (Common tobacco) protein is Pathogenesis-related protein 1C.